A 557-amino-acid polypeptide reads, in one-letter code: Glucose-6-phosphate isomerase (557 aa).

Catalysis depends on E361, which acts as the Proton donor. Active-site residues include H392 and K520.

Belongs to the GPI family.

It localises to the cytoplasm. It carries out the reaction alpha-D-glucose 6-phosphate = beta-D-fructose 6-phosphate. Its pathway is carbohydrate biosynthesis; gluconeogenesis. It participates in carbohydrate degradation; glycolysis; D-glyceraldehyde 3-phosphate and glycerone phosphate from D-glucose: step 2/4. In terms of biological role, catalyzes the reversible isomerization of glucose-6-phosphate to fructose-6-phosphate. In Acinetobacter venetianus (strain ATCC 31012 / DSM 23050 / BCRC 14357 / CCUG 45561 / CIP 110063 / KCTC 2702 / LMG 19082 / RAG-1), this protein is Glucose-6-phosphate isomerase.